A 308-amino-acid polypeptide reads, in one-letter code: tRNA pseudouridine synthase B (308 aa).

D51 (nucleophile) is an active-site residue.

The protein belongs to the pseudouridine synthase TruB family. Type 1 subfamily.

It catalyses the reaction uridine(55) in tRNA = pseudouridine(55) in tRNA. Its function is as follows. Responsible for synthesis of pseudouridine from uracil-55 in the psi GC loop of transfer RNAs. This Aromatoleum aromaticum (strain DSM 19018 / LMG 30748 / EbN1) (Azoarcus sp. (strain EbN1)) protein is tRNA pseudouridine synthase B.